A 145-amino-acid polypeptide reads, in one-letter code: MAQKQTPSGPTQRQQRVAELIRHALAEVLQRGDIQDPVLGSHVVTVPEVRMSPDLKLATAYVMPLGGQDEAPVIAALERHKKILRQEVARRVNLKFAPDLRFRRDETFDEAARIDQLLRSEKVQRDLESAPREDDEGEPASSSRD.

The span at 122-132 (KVQRDLESAPR) shows a compositional bias: basic and acidic residues. Residues 122-145 (KVQRDLESAPREDDEGEPASSSRD) form a disordered region.

This sequence belongs to the RbfA family. In terms of assembly, monomer. Binds 30S ribosomal subunits, but not 50S ribosomal subunits or 70S ribosomes.

Its subcellular location is the cytoplasm. In terms of biological role, one of several proteins that assist in the late maturation steps of the functional core of the 30S ribosomal subunit. Associates with free 30S ribosomal subunits (but not with 30S subunits that are part of 70S ribosomes or polysomes). Required for efficient processing of 16S rRNA. May interact with the 5'-terminal helix region of 16S rRNA. This Methylorubrum extorquens (strain CM4 / NCIMB 13688) (Methylobacterium extorquens) protein is Ribosome-binding factor A.